A 154-amino-acid chain; its full sequence is MAFLVALLVVLGLQLVQSNALTCHVCEAQNSYACSNPSQCPGEKKFCLLAVTRIFERFFYVSKQCTRRCPTPVVSPPSTNPPSEPKEFLIEKPMPFLFYKCCQWDSCNGEGPPTDQLLKEQPGKASGRRHRYIELLLTGFMVLTANGLSALCLL.

Residues 1 to 20 (MAFLVALLVVLGLQLVQSNA) form the signal peptide. Residues 21-117 (LTCHVCEAQN…NGEGPPTDQL (97 aa)) form the UPAR/Ly6 domain. Residue Gly-123 is the site of GPI-anchor amidated glycine attachment. The propeptide at 124–154 (KASGRRHRYIELLLTGFMVLTANGLSALCLL) is removed in mature form.

In terms of assembly, interacts with ADAM3 and TEX101. Strongly expressed in testes and weakly expressed in the epididymis, ovary, and uterus. Expressed in testicular germ cells (TGCs). Expressed in the testicular seminiferous tubules, in spermatocytes, spermatids, and testicular spermatozoa.

The protein localises to the secreted. It localises to the cytoplasm. It is found in the cell membrane. The protein resides in the cytoplasmic vesicle. Its subcellular location is the secretory vesicle. The protein localises to the acrosome. It localises to the membrane raft. Required for sperm migration into the oviduct and male fertility by controlling binding of sperm to zona pellucida. May play a role in cell growth. This is Lymphocyte antigen 6K from Mus musculus (Mouse).